Here is a 203-residue protein sequence, read N- to C-terminus: MSRYTGPSWKRSRRLGISLSGTGKEISRRNYAPGDHGPNNRAKVSEYGQQLKEKQKLRWMFGLNERQFQNLFIRAGKIREGKHGVNFMALLERRLDNIVYRLGLASTREQARQLVNHGHILVDGKRVDIPSYEVKVGQEISLRDKSKNLQQVKDALDAVVSRPPFVSFDDSKMTGTLVRLPERDEMEPEVDEALIVEWYNKKL.

The S4 RNA-binding domain occupies 93-153; that stretch reads RRLDNIVYRL…DKSKNLQQVK (61 aa).

It belongs to the universal ribosomal protein uS4 family. Part of the 30S ribosomal subunit. Contacts protein S5. The interaction surface between S4 and S5 is involved in control of translational fidelity.

Its function is as follows. One of the primary rRNA binding proteins, it binds directly to 16S rRNA where it nucleates assembly of the body of the 30S subunit. In terms of biological role, with S5 and S12 plays an important role in translational accuracy. The chain is Small ribosomal subunit protein uS4 from Lactobacillus gasseri (strain ATCC 33323 / DSM 20243 / BCRC 14619 / CIP 102991 / JCM 1131 / KCTC 3163 / NCIMB 11718 / NCTC 13722 / AM63).